A 1688-amino-acid chain; its full sequence is Voltage-dependent L-type calcium channel subunit alpha-1S (1688 aa).

The interval Met-1–Pro-24 is disordered. At Met-1–Lys-51 the chain is on the cytoplasmic side. One copy of the I repeat lies at Asn-38–Phe-335. Residues Pro-52 to Ile-70 traverse the membrane as a helical segment. At Phe-71–Lys-88 the chain is on the extracellular side. N-linked (GlcNAc...) asparagine glycosylation is present at Asn-80. The chain crosses the membrane as a helical span at residues Val-89–Tyr-108. Residues Gly-109–Asn-120 lie on the Cytoplasmic side of the membrane. Residues Gly-121–Leu-139 traverse the membrane as a helical segment. The Extracellular segment spans residues Glu-140–Asn-158. The helical transmembrane segment at Val-159–Val-177 threads the bilayer. Residues Pro-178 to His-196 lie on the Cytoplasmic side of the membrane. Residues Ile-197–Phe-216 form a helical membrane-spanning segment. The Extracellular portion of the chain corresponds to Ser-217 to Trp-307. N-linked (GlcNAc...) asparagine glycosylation is present at Asn-255. Ca(2+) is bound at residue Glu-290. Residues Pro-308–Ser-332 traverse the membrane as a helical segment. Residues Gly-333–Arg-431 lie on the Cytoplasmic side of the membrane. Residues Gln-355 to Glu-372 are binding to the beta subunit. One copy of the II repeat lies at His-417–Leu-663. Residues Phe-432–Thr-450 form a helical membrane-spanning segment. Over Glu-451–Ile-465 the chain is Extracellular. A helical membrane pass occupies residues Ala-466 to Leu-485. Topologically, residues Gly-486 to Ser-493 are cytoplasmic. A helical membrane pass occupies residues Leu-494 to Leu-512. The Extracellular segment spans residues Val-513 to Gly-522. A helical membrane pass occupies residues Ile-523–Trp-541. The Cytoplasmic segment spans residues Thr-542–Ser-560. The chain crosses the membrane as a helical span at residues Leu-561–Phe-580. The Extracellular portion of the chain corresponds to Gly-581 to Ser-635. Glu-613 provides a ligand contact to Ca(2+). Residues Val-636–Val-660 form a helical membrane-spanning segment. Residues Asp-661–Thr-797 lie on the Cytoplasmic side of the membrane. Disordered regions lie at residues Ala-672 to Glu-696 and Glu-729 to Arg-755. A compositionally biased stretch (acidic residues) spans Pro-740–Glu-749. Residues Asn-784–Phe-1066 form an III repeat. A helical transmembrane segment spans residues Thr-798–Ala-816. The Extracellular portion of the chain corresponds to Glu-817–Lys-832. The chain crosses the membrane as a helical span at residues Leu-833–Tyr-852. Residues Gly-853–Asn-864 are Cytoplasmic-facing. A helical membrane pass occupies residues Ser-865 to Ile-883. Residues Glu-884–Val-890 are Extracellular-facing. The helical transmembrane segment at Val-891–Ala-909 threads the bilayer. The Cytoplasmic portion of the chain corresponds to Lys-910–Asn-928. The helical transmembrane segment at Ile-929 to Phe-948 threads the bilayer. Over Lys-949 to Glu-1038 the chain is Extracellular. Positions Arg-986–Lys-1075 are dihydropyridine binding. Glu-1012 is a Ca(2+) binding site. A helical membrane pass occupies residues Ile-1039–Ile-1063. The Cytoplasmic portion of the chain corresponds to Val-1064–Ser-1116. The IV repeat unit spans residues Asn-1103–Phe-1371. Residues Tyr-1117–Met-1135 form a helical membrane-spanning segment. Residues Gln-1136–Ile-1150 are Extracellular-facing. The chain crosses the membrane as a helical span at residues Leu-1151–Phe-1170. Topologically, residues Lys-1171–Asp-1178 are cytoplasmic. Residues Pro-1179 to Leu-1197 traverse the membrane as a helical segment. The Extracellular portion of the chain corresponds to Ser-1198 to Ser-1218. The chain crosses the membrane as a helical span at residues Ile-1219–Gly-1237. Topologically, residues Glu-1238–Tyr-1256 are cytoplasmic. Residues Val-1257–Phe-1276 form a helical membrane-spanning segment. Residues Gly-1277 to Phe-1343 lie on the Extracellular side of the membrane. The interval Leu-1324 to Lys-1390 is dihydropyridine binding. The phenylalkylamine binding stretch occupies residues Glu-1336 to Ser-1379. Residues Ala-1344 to Met-1368 form a helical membrane-spanning segment. The Cytoplasmic portion of the chain corresponds to Asp-1369–Asn-1688. 2 disordered regions span residues Pro-1635 to Thr-1664 and Arg-1669 to Asn-1688. A compositionally biased stretch (polar residues) spans Asp-1678–Asn-1688.

This sequence belongs to the calcium channel alpha-1 subunit (TC 1.A.1.11) family. As to quaternary structure, multisubunit complex consisting of alpha-1, alpha-2, beta and delta subunits in a 1:1:1:1 ratio. The channel activity is directed by the pore-forming and voltage-sensitive alpha-1 subunit. In many cases, this subunit is sufficient to generate voltage-sensitive calcium channel activity. The auxiliary subunits beta and alpha-2/delta linked by a disulfide bridge regulate the channel activity. An additional gamma subunit is present only in skeletal muscle L-type channel. Post-translationally, phosphorylation by PKA stimulates the calcium channel function. In terms of tissue distribution, skeletal muscle specific.

Its subcellular location is the membrane. In terms of biological role, voltage-sensitive calcium channels (VSCC) mediate the entry of calcium ions into excitable cells and are also involved in a variety of calcium-dependent processes, including muscle contraction, gene expression, cell motility, cell division and cell death. The isoform alpha-1S gives rise to L-type calcium currents. Long-lasting (L-type) calcium channels belong to the 'high-voltage activated' (HVA) group. They are blocked by dihydropyridines (DHP), phenylalkylamines, and by benzothiazepines. Calcium channels containing the alpha-1S subunit play an important role in excitation-contraction coupling in skele|tal muscle. This Aquarana catesbeiana (American bullfrog) protein is Voltage-dependent L-type calcium channel subunit alpha-1S.